Consider the following 469-residue polypeptide: Ubiquitin carboxyl-terminal hydrolase MINDY-1 (469 aa).

The segment at Met-1–Leu-85 is disordered. A compositionally biased stretch (basic and acidic residues) spans Glu-23–Ala-53. Low complexity predominate over residues Leu-66–Ala-76. Ser-103 carries the phosphoserine modification. Catalysis depends on Cys-137, which acts as the Nucleophile. The active-site Proton acceptor is His-319. The segment at Gln-388 to Gln-426 is ubiquitin-binding domain (UBD). A Phosphoserine modification is found at Ser-441. Residues Ser-441–Leu-469 form a disordered region. Basic and acidic residues predominate over residues Ala-453–Leu-469.

It belongs to the MINDY deubiquitinase family. FAM63 subfamily.

It carries out the reaction Thiol-dependent hydrolysis of ester, thioester, amide, peptide and isopeptide bonds formed by the C-terminal Gly of ubiquitin (a 76-residue protein attached to proteins as an intracellular targeting signal).. Hydrolase that can specifically remove 'Lys-48'-linked conjugated ubiquitin from proteins. Has exodeubiquitinase activity and has a preference for long polyubiquitin chains. May play a regulatory role at the level of protein turnover. This Homo sapiens (Human) protein is Ubiquitin carboxyl-terminal hydrolase MINDY-1.